A 221-amino-acid chain; its full sequence is Molybdenum cofactor guanylyltransferase (221 aa).

GTP contacts are provided by residues 18–20, Lys-35, Asn-63, Asp-81, and Asp-112; that span reads IAG. A Mg(2+)-binding site is contributed by Asp-112.

Belongs to the MobA family. In terms of assembly, monomer. The cofactor is Mg(2+).

The protein resides in the cytoplasm. It catalyses the reaction Mo-molybdopterin + GTP + H(+) = Mo-molybdopterin guanine dinucleotide + diphosphate. In terms of biological role, transfers a GMP moiety from GTP to Mo-molybdopterin (Mo-MPT) cofactor (Moco or molybdenum cofactor) to form Mo-molybdopterin guanine dinucleotide (Mo-MGD) cofactor. In Brucella abortus (strain S19), this protein is Molybdenum cofactor guanylyltransferase.